Reading from the N-terminus, the 989-residue chain is DNA-directed RNA polymerase subunit beta' (989 aa).

Mg(2+)-binding residues include aspartate 383, aspartate 385, and aspartate 387.

This sequence belongs to the RNA polymerase beta' chain family. The RNAP catalytic core consists of 2 alpha, 1 beta, 1 beta' and 1 omega subunit. When a sigma factor is associated with the core the holoenzyme is formed, which can initiate transcription. It depends on Mg(2+) as a cofactor.

The enzyme catalyses RNA(n) + a ribonucleoside 5'-triphosphate = RNA(n+1) + diphosphate. Its function is as follows. DNA-dependent RNA polymerase catalyzes the transcription of DNA into RNA using the four ribonucleoside triphosphates as substrates. This is DNA-directed RNA polymerase subunit beta' (rpoC) from Leuconostoc pseudomesenteroides.